The chain runs to 83 residues: Small ribosomal subunit protein bS16 (83 aa).

It belongs to the bacterial ribosomal protein bS16 family.

The sequence is that of Small ribosomal subunit protein bS16 from Ectopseudomonas mendocina (strain ymp) (Pseudomonas mendocina).